The sequence spans 193 residues: ATP-dependent Clp protease proteolytic subunit 1 (193 aa).

The active-site Nucleophile is the serine 98. Histidine 123 is a catalytic residue.

The protein belongs to the peptidase S14 family. Fourteen ClpP subunits assemble into 2 heptameric rings which stack back to back to give a disk-like structure with a central cavity, resembling the structure of eukaryotic proteasomes.

Its subcellular location is the cytoplasm. The catalysed reaction is Hydrolysis of proteins to small peptides in the presence of ATP and magnesium. alpha-casein is the usual test substrate. In the absence of ATP, only oligopeptides shorter than five residues are hydrolyzed (such as succinyl-Leu-Tyr-|-NHMec, and Leu-Tyr-Leu-|-Tyr-Trp, in which cleavage of the -Tyr-|-Leu- and -Tyr-|-Trp bonds also occurs).. Cleaves peptides in various proteins in a process that requires ATP hydrolysis. Has a chymotrypsin-like activity. Plays a major role in the degradation of misfolded proteins. The polypeptide is ATP-dependent Clp protease proteolytic subunit 1 (Bacillus cereus (strain ATCC 10987 / NRS 248)).